A 407-amino-acid polypeptide reads, in one-letter code: Nuclear hormone receptor family member nhr-134 (407 aa).

An NR C4-type zinc finger spans residues 11–31; that stretch reads CEICGQKTSGRHFGVMSCRSC. The NR C4-type; degenerate zinc-finger motif lies at 47-66; sequence RCPNGNCKLLENGKFKCKKC. The 251-residue stretch at 157–407 folds into the NR LBD domain; the sequence is QFHNSLERLA…FSEPDMFEST (251 aa).

It belongs to the nuclear hormone receptor family.

It is found in the nucleus. In terms of biological role, orphan nuclear receptor. The sequence is that of Nuclear hormone receptor family member nhr-134 (nhr-134) from Caenorhabditis elegans.